An 815-amino-acid chain; its full sequence is Probable receptor-like protein kinase At2g39360 (815 aa).

Positions 1–26 (MINLKLFLELKLCFLITLLCSSHISS) are cleaved as a signal peptide. Topologically, residues 27-407 (VSDTFFINCG…SSSNKSSNTS (381 aa)) are extracellular. Residues Asn-40, Asn-45, Asn-125, Asn-146, Asn-209, Asn-244, Asn-277, Asn-331, Asn-355, Asn-401, and Asn-405 are each glycosylated (N-linked (GlcNAc...) asparagine). A helical membrane pass occupies residues 408–428 (VGLIAGLSAALCVALVFGVVV). Over 429-815 (SWWCIRKRRR…FAQMVREETR (387 aa)) the chain is Cytoplasmic. A Protein kinase domain is found at 487 to 761 (FDESLVIGVG…GDLLWNLEFM (275 aa)). ATP-binding positions include 493 to 501 (IGVGGFGKV) and Lys-515. Asp-612 serves as the catalytic Proton acceptor.

The protein belongs to the protein kinase superfamily. Ser/Thr protein kinase family.

The protein resides in the cell membrane. This chain is Probable receptor-like protein kinase At2g39360, found in Arabidopsis thaliana (Mouse-ear cress).